Reading from the N-terminus, the 263-residue chain is Endonuclease 8 (263 aa).

Pro-2 serves as the catalytic Schiff-base intermediate with DNA. The active-site Proton donor is the Glu-3. Lys-53 acts as the Proton donor; for beta-elimination activity in catalysis. Gln-70, Arg-125, and Asn-169 together coordinate DNA. The segment at 229–263 (KVFHREGKACERCGGVIERSTLSSRPFYGCPVCQK) adopts an FPG-type zinc-finger fold. The active-site Proton donor; for delta-elimination activity is the Arg-253.

This sequence belongs to the FPG family. Requires Zn(2+) as cofactor.

It carries out the reaction 2'-deoxyribonucleotide-(2'-deoxyribose 5'-phosphate)-2'-deoxyribonucleotide-DNA = a 3'-end 2'-deoxyribonucleotide-(2,3-dehydro-2,3-deoxyribose 5'-phosphate)-DNA + a 5'-end 5'-phospho-2'-deoxyribonucleoside-DNA + H(+). Functionally, involved in base excision repair of DNA damaged by oxidation or by mutagenic agents. Acts as a DNA glycosylase that recognizes and removes damaged bases. Has a preference for oxidized pyrimidines, such as thymine glycol, 5,6-dihydrouracil and 5,6-dihydrothymine. Has AP (apurinic/apyrimidinic) lyase activity and introduces nicks in the DNA strand. Cleaves the DNA backbone by beta-delta elimination to generate a single-strand break at the site of the removed base with both 3'- and 5'-phosphates. The sequence is that of Endonuclease 8 from Enterobacter sp. (strain 638).